We begin with the raw amino-acid sequence, 317 residues long: Apolipoprotein E (317 aa).

Residues 1–18 form the signal peptide; it reads MKALWVALVVTLLAGCRA. 8 consecutive repeat copies span residues 79–100, 101–122, 123–144, 145–166, 167–188, 189–210, 211–232, and 233–254. Residues 79–254 form an 8 X 22 AA approximate tandem repeats region; that stretch reads ALMEETMKEV…RLDKMREQLE (176 aa). Methionine 142 bears the Methionine sulfoxide mark. Residues 157–167 form an LDL and other lipoprotein receptors binding region; it reads HLRKLRKRLLR. Residue 161-164 participates in heparin binding; sequence LRKR. The tract at residues 209-289 is lipid-binding and lipoprotein association; sequence TATTSTLGSQ…GWFQPLVEDL (81 aa). O-linked (GalNAc...) threonine glycosylation occurs at threonine 211. Heparin is bound at residue 228 to 235; it reads GQKLRGRL. The segment at 265 to 317 is homooligomerization; the sequence is SQMRLQAETFQARLKGWFQPLVEDLQRQWAGLVEKVQQLAVGTTPTPAASKNQ. Residues 277–289 are specificity for association with VLDL; the sequence is RLKGWFQPLVEDL. O-linked (GalNAc...) threonine glycosylation occurs at threonine 310.

The protein belongs to the apolipoprotein A1/A4/E family. In terms of assembly, homotetramer. May interact with ABCA1; functionally associated with ABCA1 in the biogenesis of HDLs. May interact with APP/A4 amyloid-beta peptide; the interaction is extremely stable in vitro but its physiological significance is unclear. May interact with MAPT. May interact with MAP2. In the cerebrospinal fluid, interacts with secreted SORL1. Interacts with PMEL; this allows the loading of PMEL luminal fragment on ILVs to induce fibril nucleation. In terms of processing, APOE exists as multiple glycosylated and sialylated glycoforms within cells and in plasma. The extent of glycosylation and sialylation are tissue and context specific. Glycated in plasma VLDL. Post-translationally, phosphorylated by FAM20C in the extracellular medium.

It is found in the secreted. Its subcellular location is the extracellular space. It localises to the extracellular matrix. The protein localises to the extracellular vesicle. The protein resides in the endosome. It is found in the multivesicular body. APOE is an apolipoprotein, a protein associating with lipid particles, that mainly functions in lipoprotein-mediated lipid transport between organs via the plasma and interstitial fluids. APOE is a core component of plasma lipoproteins and is involved in their production, conversion and clearance. Apolipoproteins are amphipathic molecules that interact both with lipids of the lipoprotein particle core and the aqueous environment of the plasma. As such, APOE associates with chylomicrons, chylomicron remnants, very low density lipoproteins (VLDL) and intermediate density lipoproteins (IDL) but shows a preferential binding to high-density lipoproteins (HDL). It also binds a wide range of cellular receptors including the LDL receptor/LDLR and the very low-density lipoprotein receptor/VLDLR that mediate the cellular uptake of the APOE-containing lipoprotein particles. Finally, APOE also has a heparin-binding activity and binds heparan-sulfate proteoglycans on the surface of cells, a property that supports the capture and the receptor-mediated uptake of APOE-containing lipoproteins by cells. The protein is Apolipoprotein E (APOE) of Camelus dromedarius (Dromedary).